Reading from the N-terminus, the 425-residue chain is Serine--tRNA ligase (425 aa).

229–231 (TSE) is a binding site for L-serine. Residues 259–261 (RKE) and V275 each bind ATP. L-serine is bound at residue E282. 349–352 (EITS) provides a ligand contact to ATP. Position 384 (T384) interacts with L-serine.

Belongs to the class-II aminoacyl-tRNA synthetase family. Type-1 seryl-tRNA synthetase subfamily. In terms of assembly, homodimer. The tRNA molecule binds across the dimer.

Its subcellular location is the cytoplasm. The enzyme catalyses tRNA(Ser) + L-serine + ATP = L-seryl-tRNA(Ser) + AMP + diphosphate + H(+). It carries out the reaction tRNA(Sec) + L-serine + ATP = L-seryl-tRNA(Sec) + AMP + diphosphate + H(+). The protein operates within aminoacyl-tRNA biosynthesis; selenocysteinyl-tRNA(Sec) biosynthesis; L-seryl-tRNA(Sec) from L-serine and tRNA(Sec): step 1/1. Its function is as follows. Catalyzes the attachment of serine to tRNA(Ser). Is also able to aminoacylate tRNA(Sec) with serine, to form the misacylated tRNA L-seryl-tRNA(Sec), which will be further converted into selenocysteinyl-tRNA(Sec). The protein is Serine--tRNA ligase of Borreliella afzelii (strain PKo) (Borrelia afzelii).